We begin with the raw amino-acid sequence, 301 residues long: uncharacterized protein (301 aa).

In terms of domain architecture, HTH lysR-type spans 1–58 (MDIRHLTYFLEVARLKSFTKASQSLYVSQPTISKMIKNLEEELGIELFYRNGRQVELT). A DNA-binding region (H-T-H motif) is located at residues 18–37 (FTKASQSLYVSQPTISKMIK).

It belongs to the LysR transcriptional regulatory family.

This is an uncharacterized protein from Bacillus subtilis (strain 168).